We begin with the raw amino-acid sequence, 365 residues long: tRNA-specific 2-thiouridylase MnmA (365 aa).

ATP-binding positions include Ala14–Ser21 and Leu40. Residue Cys108 is the Nucleophile of the active site. An intrachain disulfide couples Cys108 to Cys204. Gly132 contributes to the ATP binding site. The interval Lys154–Gln156 is interaction with tRNA. The active-site Cysteine persulfide intermediate is Cys204.

It belongs to the MnmA/TRMU family.

Its subcellular location is the cytoplasm. The enzyme catalyses S-sulfanyl-L-cysteinyl-[protein] + uridine(34) in tRNA + AH2 + ATP = 2-thiouridine(34) in tRNA + L-cysteinyl-[protein] + A + AMP + diphosphate + H(+). In terms of biological role, catalyzes the 2-thiolation of uridine at the wobble position (U34) of tRNA, leading to the formation of s(2)U34. The protein is tRNA-specific 2-thiouridylase MnmA of Rickettsia felis (strain ATCC VR-1525 / URRWXCal2) (Rickettsia azadi).